The following is a 322-amino-acid chain: Cytochrome c biogenesis protein CcsA (322 aa).

8 consecutive transmembrane segments (helical) span residues leucine 6–phenylalanine 26, leucine 45–phenylalanine 65, asparagine 69–tyrosine 89, leucine 97–leucine 117, methionine 144–leucine 164, leucine 230–asparagine 250, tryptophan 265–tryptophan 285, and alanine 291–leucine 311.

It belongs to the CcmF/CycK/Ccl1/NrfE/CcsA family. As to quaternary structure, may interact with Ccs1.

Its subcellular location is the plastid. The protein resides in the cyanelle thylakoid membrane. Its function is as follows. Required during biogenesis of c-type cytochromes (cytochrome c6 and cytochrome f) at the step of heme attachment. The protein is Cytochrome c biogenesis protein CcsA of Cyanophora paradoxa.